Reading from the N-terminus, the 533-residue chain is NAD(P)H-quinone oxidoreductase chain 4 1 (533 aa).

A run of 14 helical transmembrane segments spans residues 6–26, 37–57, 87–107, 113–133, 137–157, 169–189, 209–229, 243–263, 277–297, 311–331, 332–352, 376–396, 417–437, and 461–481; these read FPWL…IPLI, YSLF…WQHF, LSMP…LASW, PKLF…VFTA, MLFF…ISIW, FILY…ALAF, WLEL…LSIF, NAPG…YALI, FAPV…LNAF, ISHM…GLNG, ALLQ…LAGV, FALF…SGFV, VTIL…LSML, and LFVA…PKLT.

It belongs to the complex I subunit 4 family.

Its subcellular location is the cellular thylakoid membrane. It catalyses the reaction a plastoquinone + NADH + (n+1) H(+)(in) = a plastoquinol + NAD(+) + n H(+)(out). The enzyme catalyses a plastoquinone + NADPH + (n+1) H(+)(in) = a plastoquinol + NADP(+) + n H(+)(out). In terms of biological role, NDH-1 shuttles electrons from NAD(P)H, via FMN and iron-sulfur (Fe-S) centers, to quinones in the respiratory chain. The immediate electron acceptor for the enzyme in this species is believed to be plastoquinone. Couples the redox reaction to proton translocation (for every two electrons transferred, four hydrogen ions are translocated across the cytoplasmic membrane), and thus conserves the redox energy in a proton gradient. This Synechococcus elongatus (strain ATCC 33912 / PCC 7942 / FACHB-805) (Anacystis nidulans R2) protein is NAD(P)H-quinone oxidoreductase chain 4 1.